Here is a 252-residue protein sequence, read N- to C-terminus: Hydroxyacylglutathione hydrolase (252 aa).

Residues His-54, His-56, Asp-58, His-59, His-113, Asp-132, and His-170 each contribute to the Zn(2+) site.

Belongs to the metallo-beta-lactamase superfamily. Glyoxalase II family. In terms of assembly, monomer. Requires Zn(2+) as cofactor.

The enzyme catalyses an S-(2-hydroxyacyl)glutathione + H2O = a 2-hydroxy carboxylate + glutathione + H(+). Its pathway is secondary metabolite metabolism; methylglyoxal degradation; (R)-lactate from methylglyoxal: step 2/2. In terms of biological role, thiolesterase that catalyzes the hydrolysis of S-D-lactoyl-glutathione to form glutathione and D-lactic acid. The protein is Hydroxyacylglutathione hydrolase of Synechococcus sp. (strain JA-2-3B'a(2-13)) (Cyanobacteria bacterium Yellowstone B-Prime).